The primary structure comprises 844 residues: Translation initiation factor IF-2 (844 aa).

Positions 120-132 are enriched in polar residues; that stretch reads RNSVNLVQPQQEK. The disordered stretch occupies residues 120-220; that stretch reads RNSVNLVQPQ…SGKGFKKANP (101 aa). A compositionally biased stretch (basic and acidic residues) spans 161–175; sequence DEEKSSEDKSTESKN. A compositionally biased stretch (basic residues) spans 205 to 219; sequence SKAKKASGKGFKKAN. Residues 343 to 510 enclose the tr-type G domain; that stretch reads SRAPVVTIMG…AVLLQSEVLE (168 aa). Residues 352–359 form a G1 region; the sequence is GHVDHGKT. 352–359 is a GTP binding site; sequence GHVDHGKT. Residues 377–381 are G2; it reads GITQH. Residues 398–401 form a G3 region; sequence DTPG. GTP contacts are provided by residues 398–402 and 452–455; these read DTPGH and NKID. The interval 452–455 is G4; that stretch reads NKID. The segment at 488–490 is G5; that stretch reads SAK.

Belongs to the TRAFAC class translation factor GTPase superfamily. Classic translation factor GTPase family. IF-2 subfamily.

The protein resides in the cytoplasm. In terms of biological role, one of the essential components for the initiation of protein synthesis. Protects formylmethionyl-tRNA from spontaneous hydrolysis and promotes its binding to the 30S ribosomal subunits. Also involved in the hydrolysis of GTP during the formation of the 70S ribosomal complex. The chain is Translation initiation factor IF-2 from Francisella philomiragia subsp. philomiragia (strain ATCC 25017 / CCUG 19701 / FSC 153 / O#319-036).